A 934-amino-acid polypeptide reads, in one-letter code: Glycine dehydrogenase (decarboxylating) (934 aa).

The residue at position 687 (Lys-687) is an N6-(pyridoxal phosphate)lysine.

The protein belongs to the GcvP family. The glycine cleavage system is composed of four proteins: P, T, L and H. Pyridoxal 5'-phosphate is required as a cofactor.

It catalyses the reaction N(6)-[(R)-lipoyl]-L-lysyl-[glycine-cleavage complex H protein] + glycine + H(+) = N(6)-[(R)-S(8)-aminomethyldihydrolipoyl]-L-lysyl-[glycine-cleavage complex H protein] + CO2. Functionally, the glycine cleavage system catalyzes the degradation of glycine. The P protein binds the alpha-amino group of glycine through its pyridoxal phosphate cofactor; CO(2) is released and the remaining methylamine moiety is then transferred to the lipoamide cofactor of the H protein. This chain is Glycine dehydrogenase (decarboxylating), found in Nocardia farcinica (strain IFM 10152).